The chain runs to 182 residues: PRA1 family protein D (182 aa).

Alanine 2 carries the post-translational modification N-acetylalanine. A run of 3 helical transmembrane segments spans residues 68 to 88 (LITR…WFFL), 107 to 127 (IVAV…GVWL), and 129 to 149 (ALTT…LRGT). Residues 163 to 182 (PMLSTSGGGNDGARGDYSGI) form a disordered region.

This sequence belongs to the PRA1 family. As to quaternary structure, interacts with PRA1F2 and PRA1F3. Interacts with the cauliflower mosaic virus (CaMV) movement protein (via N-terminus). Expressed in hypocotyls, roots, lateral roots, lateral root caps, columella cells, leaves, shoot apex, stems and flowers.

It is found in the endosome membrane. Functionally, may be involved in both secretory and endocytic intracellular trafficking in the endosomal/prevacuolar compartments. In Arabidopsis thaliana (Mouse-ear cress), this protein is PRA1 family protein D (PRA1D).